The chain runs to 699 residues: Receptor-type tyrosine-protein phosphatase epsilon (699 aa).

A signal peptide spans M1 to G22. Positions G20–T36 are enriched in low complexity. A disordered region spans residues G20–D41. 2 N-linked (GlcNAc...) asparagine glycosylation sites follow: N23 and N31. Topologically, residues N23–P47 are extracellular. Residues L48 to F68 traverse the membrane as a helical segment. The Cytoplasmic portion of the chain corresponds to R69–K699. Tyrosine-protein phosphatase domains lie at F134 to Y393 and L425 to F688. Residues D302, C334 to R340, and Q378 each bind substrate. C334 acts as the Phosphocysteine intermediate in catalysis. The active-site Phosphocysteine intermediate is the C629. Residue Y695 is modified to Phosphotyrosine.

Belongs to the protein-tyrosine phosphatase family. Receptor class 4 subfamily. Monomer. Isoform 2: Homodimer. Can form oligomers. Dimerization is increased by oxidative stress and decreased by EGFR. Isoform 2 interacts with GRB2. A catalytically active cytoplasmic form (p65) is produced by proteolytic cleavage of either isoform 1, isoform 2 or isoform 3. In terms of processing, isoform 1 and isoform 2 are phosphorylated on tyrosine residues by tyrosine kinase Neu. Post-translationally, N-glycosylated. In terms of tissue distribution, isoform 1 is highly expressed in the brain, lung, spleen and testis. Isoform 2 is highly expressed in thymus, spleen and lung. Isoform 1 and isoform 2 are expressed in primary hepatocytes.

The protein localises to the cell membrane. Its subcellular location is the cytoplasm. The catalysed reaction is O-phospho-L-tyrosyl-[protein] + H2O = L-tyrosyl-[protein] + phosphate. Isoform 1 plays a critical role in signaling transduction pathways and phosphoprotein network topology in red blood cells. May play a role in osteoclast formation and function. Acts as a negative regulator of insulin receptor (IR) signaling and is involved in insulin-induced glucose metabolism mainly through direct dephosphorylation and inactivation of IR in hepatocytes and liver. In terms of biological role, isoform 2 acts as a negative regulator of insulin receptor (IR) signaling in skeletal muscle. Regulates insulin-induced tyrosine phosphorylation of insulin receptor (IR) and insulin receptor substrate 1 (IRS-1), phosphorylation of protein kinase B and glycogen synthase kinase-3 and insulin induced stimulation of glucose uptake. Functionally, isoform 1 and isoform 2 act as a negative regulator of FceRI-mediated signal transduction leading to cytokine production and degranulation, most likely by acting at the level of SYK to affect downstream events such as phosphorylation of SLP76 and LAT and mobilization of Ca(2+). This Rattus norvegicus (Rat) protein is Receptor-type tyrosine-protein phosphatase epsilon (Ptpre).